We begin with the raw amino-acid sequence, 217 residues long: Ribonuclease HII (217 aa).

The RNase H type-2 domain occupies 34–217 (WPVAGTDEAG…RMSFRPLKRD (184 aa)). Positions 40, 41, and 131 each coordinate a divalent metal cation.

This sequence belongs to the RNase HII family. It depends on Mn(2+) as a cofactor. Mg(2+) serves as cofactor.

Its subcellular location is the cytoplasm. The enzyme catalyses Endonucleolytic cleavage to 5'-phosphomonoester.. Endonuclease that specifically degrades the RNA of RNA-DNA hybrids. This chain is Ribonuclease HII, found in Agrobacterium fabrum (strain C58 / ATCC 33970) (Agrobacterium tumefaciens (strain C58)).